The chain runs to 349 residues: 4-hydroxy-3-methylbut-2-en-1-yl diphosphate synthase (flavodoxin) (349 aa).

[4Fe-4S] cluster is bound by residues Cys264, Cys267, Cys299, and Glu306.

This sequence belongs to the IspG family. Requires [4Fe-4S] cluster as cofactor.

The catalysed reaction is (2E)-4-hydroxy-3-methylbut-2-enyl diphosphate + oxidized [flavodoxin] + H2O + 2 H(+) = 2-C-methyl-D-erythritol 2,4-cyclic diphosphate + reduced [flavodoxin]. The protein operates within isoprenoid biosynthesis; isopentenyl diphosphate biosynthesis via DXP pathway; isopentenyl diphosphate from 1-deoxy-D-xylulose 5-phosphate: step 5/6. Converts 2C-methyl-D-erythritol 2,4-cyclodiphosphate (ME-2,4cPP) into 1-hydroxy-2-methyl-2-(E)-butenyl 4-diphosphate. The protein is 4-hydroxy-3-methylbut-2-en-1-yl diphosphate synthase (flavodoxin) of Clostridium acetobutylicum (strain ATCC 824 / DSM 792 / JCM 1419 / IAM 19013 / LMG 5710 / NBRC 13948 / NRRL B-527 / VKM B-1787 / 2291 / W).